Here is a 417-residue protein sequence, read N- to C-terminus: Hydroxysqualene dehydroxylase (417 aa).

This sequence belongs to the HpnE family.

It catalyses the reaction squalene + FAD + H2O + H(+) = hydroxysqualene + FADH2. It functions in the pathway secondary metabolite biosynthesis; hopanoid biosynthesis. Involved in the biosynthesis of the hopanoid precursor squalene (SQ) from farnesyl diphosphate (FPP). Catalyzes the third (last) step, the reduction of hydroxysqualene (HSQ) to SQ. The sequence is that of Hydroxysqualene dehydroxylase from Sinorhizobium fredii (strain NBRC 101917 / NGR234).